The following is a 185-amino-acid chain: Peptidoglycan-recognition protein SC1a/b (185 aa).

The N-terminal stretch at 1-21 (MVSKVALLLAVLVCSQYMAQG) is a signal peptide. An N-acetylmuramoyl-L-alanine amidase domain is found at 46–170 (SYAIIHHTAG…RQVSATECPG (125 aa)). His-51 contacts Zn(2+). Cys-58 and Cys-64 form a disulfide bridge. Zn(2+)-binding residues include His-160 and Cys-168.

This sequence belongs to the N-acetylmuramoyl-L-alanine amidase 2 family. Requires Zn(2+) as cofactor.

It is found in the secreted. The catalysed reaction is Hydrolyzes the link between N-acetylmuramoyl residues and L-amino acid residues in certain cell-wall glycopeptides.. In terms of biological role, N-acetylmuramyl-L-alanine amidase involved in innate immunity by degrading bacterial peptidoglycans (PGN). Plays a scavenger role by digesting biologically active PGN into biologically inactive fragments. Has no direct bacteriolytic activity. The sequence is that of Peptidoglycan-recognition protein SC1a/b (PGRP-SC1a) from Drosophila simulans (Fruit fly).